Reading from the N-terminus, the 418-residue chain is Histidinol dehydrogenase (418 aa).

The NAD(+) site is built by Tyr-119, Gln-180, and Asn-203. Substrate is bound by residues Thr-226, Gln-248, and His-251. Zn(2+) is bound by residues Gln-248 and His-251. Active-site proton acceptor residues include Glu-316 and His-317. Residues His-317, Asp-350, Glu-404, and His-409 each contribute to the substrate site. Asp-350 contacts Zn(2+). His-409 lines the Zn(2+) pocket.

The protein belongs to the histidinol dehydrogenase family. The cofactor is Zn(2+).

It catalyses the reaction L-histidinol + 2 NAD(+) + H2O = L-histidine + 2 NADH + 3 H(+). Its pathway is amino-acid biosynthesis; L-histidine biosynthesis; L-histidine from 5-phospho-alpha-D-ribose 1-diphosphate: step 9/9. Functionally, catalyzes the sequential NAD-dependent oxidations of L-histidinol to L-histidinaldehyde and then to L-histidine. The protein is Histidinol dehydrogenase of Staphylococcus aureus (strain MRSA252).